The chain runs to 331 residues: Transmembrane protein 59-like (331 aa).

The signal sequence occupies residues 1-21; sequence MAAVALPLLLLLASPATPTPA. Positions 15 to 62 are disordered; it reads PATPTPARDPFSPQLGDTQRCQQRCRQRHPGLPPAQPEPEGPSESPNN. Positions 45–54 are enriched in pro residues; that stretch reads GLPPAQPEPE. The N-linked (GlcNAc...) asparagine glycan is linked to Asn-90. A helical transmembrane segment spans residues 258–278; that stretch reads VLFCCLFLSVLIILWLSCCTL. A Microbody targeting signal motif is present at residues 329 to 331; the sequence is TTL.

Belongs to the TMEM59 family.

It localises to the golgi apparatus membrane. Modulates the O-glycosylation and complex N-glycosylation steps occurring during the Golgi maturation of APP. Inhibits APP transport to the cell surface and further shedding. This chain is Transmembrane protein 59-like (Tmem59l), found in Rattus norvegicus (Rat).